We begin with the raw amino-acid sequence, 404 residues long: 2,3-diketo-5-methylthiopentyl-1-phosphate enolase (404 aa).

The Proton acceptor role is filled by K91. Residues K140, K166 to E169, H257, G329, and G351 to G352 contribute to the substrate site. Mg(2+) is bound by residues K166, D168, and E169. At K166 the chain carries N6-carboxylysine.

This sequence belongs to the RuBisCO large chain family. Type IV subfamily. As to quaternary structure, homodimer. It depends on Mg(2+) as a cofactor.

It carries out the reaction 5-methylsulfanyl-2,3-dioxopentyl phosphate = 2-hydroxy-5-methylsulfanyl-3-oxopent-1-enyl phosphate. Its pathway is amino-acid biosynthesis; L-methionine biosynthesis via salvage pathway; L-methionine from S-methyl-5-thio-alpha-D-ribose 1-phosphate: step 3/6. Catalyzes the enolization of 2,3-diketo-5-methylthiopentyl-1-phosphate (DK-MTP-1-P) into 2-hydroxy-3-keto-5-methylthiopentenyl-1-phosphate (HK-MTPenyl-1-P). This is 2,3-diketo-5-methylthiopentyl-1-phosphate enolase from Bacillus velezensis (strain DSM 23117 / BGSC 10A6 / LMG 26770 / FZB42) (Bacillus amyloliquefaciens subsp. plantarum).